We begin with the raw amino-acid sequence, 130 residues long: Small ribosomal subunit protein uS9 (130 aa).

Belongs to the universal ribosomal protein uS9 family.

This Neisseria gonorrhoeae (strain ATCC 700825 / FA 1090) protein is Small ribosomal subunit protein uS9.